A 53-amino-acid polypeptide reads, in one-letter code: UPF0337 protein LJ_0034.1 (53 aa).

The tract at residues 27–53 is disordered; sequence AREVEGKAQQAKGKVKSKATEVKEDLE. The segment covering 44–53 has biased composition (basic and acidic residues); the sequence is KATEVKEDLE.

Belongs to the UPF0337 (CsbD) family.

The sequence is that of UPF0337 protein LJ_0034.1 from Lactobacillus johnsonii (strain CNCM I-12250 / La1 / NCC 533).